The chain runs to 407 residues: Arginine deiminase (407 aa).

Cys-397 serves as the catalytic Amidino-cysteine intermediate.

Belongs to the arginine deiminase family.

The protein resides in the cytoplasm. The catalysed reaction is L-arginine + H2O = L-citrulline + NH4(+). It functions in the pathway amino-acid degradation; L-arginine degradation via ADI pathway; carbamoyl phosphate from L-arginine: step 1/2. The sequence is that of Arginine deiminase from Salmonella arizonae (strain ATCC BAA-731 / CDC346-86 / RSK2980).